Reading from the N-terminus, the 273-residue chain is Putative pyruvate, phosphate dikinase regulatory protein (273 aa).

An ADP-binding site is contributed by 149 to 156 (GPSRTSKT).

This sequence belongs to the pyruvate, phosphate/water dikinase regulatory protein family. PDRP subfamily.

The enzyme catalyses N(tele)-phospho-L-histidyl/L-threonyl-[pyruvate, phosphate dikinase] + ADP = N(tele)-phospho-L-histidyl/O-phospho-L-threonyl-[pyruvate, phosphate dikinase] + AMP + H(+). It catalyses the reaction N(tele)-phospho-L-histidyl/O-phospho-L-threonyl-[pyruvate, phosphate dikinase] + phosphate + H(+) = N(tele)-phospho-L-histidyl/L-threonyl-[pyruvate, phosphate dikinase] + diphosphate. Functionally, bifunctional serine/threonine kinase and phosphorylase involved in the regulation of the pyruvate, phosphate dikinase (PPDK) by catalyzing its phosphorylation/dephosphorylation. The protein is Putative pyruvate, phosphate dikinase regulatory protein of Rickettsia felis (strain ATCC VR-1525 / URRWXCal2) (Rickettsia azadi).